Here is a 351-residue protein sequence, read N- to C-terminus: Heat-inducible transcription repressor HrcA (351 aa).

Belongs to the HrcA family.

In terms of biological role, negative regulator of class I heat shock genes (grpE-dnaK-dnaJ and groELS operons). Prevents heat-shock induction of these operons. This is Heat-inducible transcription repressor HrcA from Beutenbergia cavernae (strain ATCC BAA-8 / DSM 12333 / CCUG 43141 / JCM 11478 / NBRC 16432 / NCIMB 13614 / HKI 0122).